A 286-amino-acid chain; its full sequence is 2,3,4,5-tetrahydropyridine-2,6-dicarboxylate N-succinyltransferase (286 aa).

Substrate is bound by residues R111 and D148.

Belongs to the transferase hexapeptide repeat family. As to quaternary structure, homotrimer.

Its subcellular location is the cytoplasm. It carries out the reaction (S)-2,3,4,5-tetrahydrodipicolinate + succinyl-CoA + H2O = (S)-2-succinylamino-6-oxoheptanedioate + CoA. The protein operates within amino-acid biosynthesis; L-lysine biosynthesis via DAP pathway; LL-2,6-diaminopimelate from (S)-tetrahydrodipicolinate (succinylase route): step 1/3. The chain is 2,3,4,5-tetrahydropyridine-2,6-dicarboxylate N-succinyltransferase from Rhizobium etli (strain ATCC 51251 / DSM 11541 / JCM 21823 / NBRC 15573 / CFN 42).